The following is a 93-amino-acid chain: Phosphoribosyl-ATP pyrophosphatase (93 aa).

It belongs to the PRA-PH family.

The protein localises to the cytoplasm. The enzyme catalyses 1-(5-phospho-beta-D-ribosyl)-ATP + H2O = 1-(5-phospho-beta-D-ribosyl)-5'-AMP + diphosphate + H(+). It functions in the pathway amino-acid biosynthesis; L-histidine biosynthesis; L-histidine from 5-phospho-alpha-D-ribose 1-diphosphate: step 2/9. This Mycobacterium bovis (strain ATCC BAA-935 / AF2122/97) protein is Phosphoribosyl-ATP pyrophosphatase (hisE).